The sequence spans 78 residues: MSRRCDLTGKKANNAFAVSHSHRRTKRLQQANLQSKRVWWPSGNRWVKLKLSTKAIKTLEVKGLEAMAKEAGINLNHY.

It belongs to the bacterial ribosomal protein bL28 family.

This Trichormus variabilis (strain ATCC 29413 / PCC 7937) (Anabaena variabilis) protein is Large ribosomal subunit protein bL28.